The chain runs to 120 residues: Large ribosomal subunit protein bL21 (120 aa).

This sequence belongs to the bacterial ribosomal protein bL21 family. As to quaternary structure, part of the 50S ribosomal subunit. Contacts protein L20.

Functionally, this protein binds to 23S rRNA in the presence of protein L20. The polypeptide is Large ribosomal subunit protein bL21 (Roseiflexus castenholzii (strain DSM 13941 / HLO8)).